The following is a 379-amino-acid chain: UDP-4-amino-4-deoxy-L-arabinose--oxoglutarate aminotransferase (379 aa).

Lys-182 carries the N6-(pyridoxal phosphate)lysine modification.

It belongs to the DegT/DnrJ/EryC1 family. ArnB subfamily. In terms of assembly, homodimer. Requires pyridoxal 5'-phosphate as cofactor.

The catalysed reaction is UDP-4-amino-4-deoxy-beta-L-arabinose + 2-oxoglutarate = UDP-beta-L-threo-pentopyranos-4-ulose + L-glutamate. It functions in the pathway nucleotide-sugar biosynthesis; UDP-4-deoxy-4-formamido-beta-L-arabinose biosynthesis; UDP-4-deoxy-4-formamido-beta-L-arabinose from UDP-alpha-D-glucuronate: step 2/3. It participates in bacterial outer membrane biogenesis; lipopolysaccharide biosynthesis. Its function is as follows. Catalyzes the conversion of UDP-4-keto-arabinose (UDP-Ara4O) to UDP-4-amino-4-deoxy-L-arabinose (UDP-L-Ara4N). The modified arabinose is attached to lipid A and is required for resistance to polymyxin and cationic antimicrobial peptides. The chain is UDP-4-amino-4-deoxy-L-arabinose--oxoglutarate aminotransferase from Escherichia coli O7:K1 (strain IAI39 / ExPEC).